Here is a 568-residue protein sequence, read N- to C-terminus: Urease subunit alpha (568 aa).

Positions 130-568 (GGIDSHIHFI…LPMAQRYFLF (439 aa)) constitute a Urease domain. 3 residues coordinate Ni(2+): H135, H137, and K218. An N6-carboxylysine modification is found at K218. Substrate is bound at residue H220. Residues H247 and H273 each contribute to the Ni(2+) site. H321 serves as the catalytic Proton donor. D361 contributes to the Ni(2+) binding site.

Belongs to the metallo-dependent hydrolases superfamily. Urease alpha subunit family. As to quaternary structure, heterotrimer of UreA (gamma), UreB (beta) and UreC (alpha) subunits. Three heterotrimers associate to form the active enzyme. It depends on Ni cation as a cofactor. In terms of processing, carboxylation allows a single lysine to coordinate two nickel ions.

The protein resides in the cytoplasm. It catalyses the reaction urea + 2 H2O + H(+) = hydrogencarbonate + 2 NH4(+). It participates in nitrogen metabolism; urea degradation; CO(2) and NH(3) from urea (urease route): step 1/1. The polypeptide is Urease subunit alpha (Nitrosospira multiformis (strain ATCC 25196 / NCIMB 11849 / C 71)).